Here is a 327-residue protein sequence, read N- to C-terminus: MAKPAKRVAVTGAAGQIAYSLLFRIANGDLLGKDQPVILQLLDLPQAQAAVKGVVMELDDCAFPLLAGVVITDDPKVAFKDADVALLVGARPRSKGMERKDLLSANAEIFTVQGAALNEVASRDVKVLVVGNPANTNAYIAMKSAPDLPKKNFTAMLRLDHNRALSQLAAKSGKPVASIEKLAVWGNHSPTMYPDFRFATAEGESLLKLINDDVWNRDTFIPTVGKRGAAIIEARGLSSAASAANAAIDHVRDWVLGTNGKWVTMGIPSDGSYGIPEDIIYGVPVICENGEYKRVEGLEIDAFSREKMDGTLAELLEERDGVAHLLK.

12-18 (GAAGQIA) serves as a coordination point for NAD(+). Residues Arg-93 and Arg-99 each coordinate substrate. Residues Asn-106, Gln-113, and 130 to 132 (VGN) contribute to the NAD(+) site. Residues Asn-132 and Arg-163 each contribute to the substrate site. His-188 serves as the catalytic Proton acceptor.

The protein belongs to the LDH/MDH superfamily. MDH type 2 family.

The enzyme catalyses (S)-malate + NAD(+) = oxaloacetate + NADH + H(+). Catalyzes the reversible oxidation of malate to oxaloacetate. This is Malate dehydrogenase from Burkholderia mallei (strain NCTC 10247).